A 261-amino-acid chain; its full sequence is Kynurenine formamidase (261 aa).

Serine 9 bears the Phosphoserine mark. Positions 36-40 match the HGGXW motif; sequence HGGAW. Serine 110 (nucleophile) is an active-site residue. Residues aspartate 211 and histidine 243 contribute to the active site.

It belongs to the kynurenine formamidase family. Homodimer.

The enzyme catalyses N-formyl-L-kynurenine + H2O = L-kynurenine + formate + H(+). Its pathway is amino-acid degradation; L-tryptophan degradation via kynurenine pathway; L-kynurenine from L-tryptophan: step 2/2. Catalyzes the hydrolysis of N-formyl-L-kynurenine to L-kynurenine, the second step in the kynurenine pathway of tryptophan degradation. Kynurenine may be further oxidized to nicotinic acid, NAD(H) and NADP(H). Required for elimination of toxic metabolites. The chain is Kynurenine formamidase from Saccharomyces cerevisiae (strain ATCC 204508 / S288c) (Baker's yeast).